The chain runs to 301 residues: Single-stranded DNA-binding protein (301 aa).

An LAST region spans residues 3–7 (KRKST). Residues histidine 64, cysteine 77, cysteine 87, and cysteine 90 each contribute to the Zn(2+) site. The tract at residues 272–301 (TKTEDDFMSSSSGSSSSADDTDLDDLLNDL) is disordered. The span at 279-289 (MSSSSGSSSSA) shows a compositional bias: low complexity. The segment covering 290 to 301 (DDTDLDDLLNDL) has biased composition (acidic residues).

It belongs to the Tequatrovirus single-stranded DNA-binding protein family. Homodimer in the absence of DNA, monomer when binding DNA. Interacts with the DNA helicase assembly protein; a ternary complex between the helicase assembly protein, the single-stranded DNA-binding protein and ssDNA is an obligatory intermediate in the helicase loading mechanism. Part of the replicase complex that includes the DNA polymerase, the polymerase clamp, the clamp loader complex, the single-stranded DNA binding protein, the primase, the DnaB-like SF4 replicative helicase and the helicase assembly factor. Interacts (via C-terminus) with the viral SF1 dDA helicase. Interacts with the viral SF2 UvsW repair helicase.

Functionally, single-stranded DNA-binding protein that participates in viral DNA replication, recombination, and repair. Coats the lagging-strand ssDNA as the replication fork advances. Stimulates the activities of viral DNA polymerase and DnaB-like SF4 replicative helicase, probably via its interaction with the helicase assembly factor. Stimulates the unwinding activity of UvsW helicase, inhibits it DNA winding activity. Together with DnaB-like SF4 replicative helicase and the helicase assembly factor, promotes pairing of two homologous DNA molecules containing complementary single-stranded regions and mediates homologous DNA strand exchange. Also promotes the formation of joint molecules. mRNA specific autogenous translational repressor. The polypeptide is Single-stranded DNA-binding protein (Escherichia coli (Bacteriophage T4)).